The following is a 417-amino-acid chain: Hydrogen cyanide synthase subunit HcnC (417 aa).

A signal peptide spans 1–18; it reads MNRTYDIVIAGGGVIGAS. 7–21 contributes to the FAD binding site; the sequence is IVIAGGGVIGASCAY. Cys19 carries N-palmitoyl cysteine lipidation. Cys19 carries the S-diacylglycerol cysteine lipid modification. The helical transmembrane segment at 46–66 threads the bilayer; it reads SAGGLWAIGESVGLGCGVIFF.

It belongs to the FAD-dependent glycerol-3-phosphate dehydrogenase family. In terms of assembly, heterotrimer of HcnA, HcnB and HcnC. The cofactor is FAD.

It is found in the cell membrane. It carries out the reaction glycine + 2 A = hydrogen cyanide + 2 AH2 + CO2. Its activity is regulated as follows. Oxygen is necessary for cyanogenesis. Activated by succinate, glycine methyl ester, glucose and D,L-methionine in addition to glycine. Phenazine methosulfate, methylene blue, 2,6-dichlorophenolindophenol (DCIP) and ferricyanide can replace oxygen for the reaction. Inhibited by pyrrolnitrin and acriflavine at 1 mM concentration. In terms of biological role, a three-component membrane-bound flavoenzyme that catalyzes the formation of hydrogen cyanide, a secondary metabolite, by transfer of electrons to a cyanide-resistant branch of the aerobic respiratory chain. The sequence is that of Hydrogen cyanide synthase subunit HcnC from Pseudomonas aeruginosa (strain ATCC 15692 / DSM 22644 / CIP 104116 / JCM 14847 / LMG 12228 / 1C / PRS 101 / PAO1).